Consider the following 152-residue polypeptide: 3-dehydroquinate dehydratase (152 aa).

The active-site Proton acceptor is the Tyr-22. 3 residues coordinate substrate: Asn-73, His-79, and Asp-86. The active-site Proton donor is the His-99. Substrate is bound by residues 100-101 (LS) and Arg-110.

This sequence belongs to the type-II 3-dehydroquinase family. Homododecamer.

It catalyses the reaction 3-dehydroquinate = 3-dehydroshikimate + H2O. It functions in the pathway metabolic intermediate biosynthesis; chorismate biosynthesis; chorismate from D-erythrose 4-phosphate and phosphoenolpyruvate: step 3/7. Functionally, catalyzes a trans-dehydration via an enolate intermediate. In Gemmatimonas aurantiaca (strain DSM 14586 / JCM 11422 / NBRC 100505 / T-27), this protein is 3-dehydroquinate dehydratase.